Reading from the N-terminus, the 193-residue chain is Rho-related protein racF1 (193 aa).

10–17 (GDGAVGKT) contacts GTP. The Effector region signature appears at 32–40 (YIPTVFDNY). GTP contacts are provided by residues 57–61 (DTAGQ) and 115–118 (TKQD). At cysteine 190 the chain carries Cysteine methyl ester. Cysteine 190 carries S-geranylgeranyl cysteine lipidation. The propeptide at 191-193 (TIM) is removed in mature form.

It belongs to the small GTPase superfamily. Rho family. In terms of assembly, interacts with pakB.

The protein resides in the membrane. Functionally, might act in concert and/or share functions with other members of the RHO family in the regulation of a subset of cytoskeletal rearrangements that are required for these processes. This chain is Rho-related protein racF1 (racF1), found in Dictyostelium discoideum (Social amoeba).